Here is a 526-residue protein sequence, read N- to C-terminus: Peptide chain release factor 3 (526 aa).

The region spanning Asn9–Gln277 is the tr-type G domain. Residues Ser18 to Thr25, Asp86 to His90, and Asn140 to Asp143 contribute to the GTP site.

Belongs to the TRAFAC class translation factor GTPase superfamily. Classic translation factor GTPase family. PrfC subfamily.

It localises to the cytoplasm. Functionally, increases the formation of ribosomal termination complexes and stimulates activities of RF-1 and RF-2. It binds guanine nucleotides and has strong preference for UGA stop codons. It may interact directly with the ribosome. The stimulation of RF-1 and RF-2 is significantly reduced by GTP and GDP, but not by GMP. The chain is Peptide chain release factor 3 from Legionella pneumophila (strain Lens).